A 405-amino-acid chain; its full sequence is Serine/threonine-protein kinase 2 (405 aa).

Residues 54 to 405 enclose the Protein kinase domain; it reads NDDFYHISTG…IFSDWINGGN (352 aa). ATP is bound by residues 60 to 68 and Lys-84; that span reads ISTGGYGIV. Catalysis depends on Asp-274, which acts as the Proton acceptor.

It belongs to the protein kinase superfamily. Ser/Thr protein kinase family. Poxviruses subfamily. Phosphorylated in vivo. Autophosphorylated in vitro.

The protein localises to the host endoplasmic reticulum. The protein resides in the host endoplasmic reticulum-Golgi intermediate compartment. It carries out the reaction L-seryl-[protein] + ATP = O-phospho-L-seryl-[protein] + ADP + H(+). The catalysed reaction is L-threonyl-[protein] + ATP = O-phospho-L-threonyl-[protein] + ADP + H(+). In terms of biological role, essential serine-protein kinase involved in the early stage of virion morphogenesis. The chain is Serine/threonine-protein kinase 2 (OPG054) from Vaccinia virus (strain L-IVP) (VACV).